The following is a 348-amino-acid chain: MADSHKINFDPVDIEMEVREDENILDAAFRQGIHLMHGCREGRCSACKSYVLDGEIQMESYSTFACNDAEVDEGYVLLCRSHAFSDCTIELLNFDEDELLGGIPIQDVRTQVQAVEPKTRDIVSLRLKPIEPGKFDFKPGQYADLHIPGTDEHRSFSMATTQSRSDEVEFLIKKYPGGKFSALLDGHIQVGDEIALTGPYGSFTLKDGHVLPVVCIGGGAGMAPILSLLRHMNETENSRPARFYYGARTPADLFYLDEILELGKGIKDFRFIACLSESADGEVPGRVTVEEGMVTDVVARHETAIAKTEVYLCGPPPMVDAALMFLDANCVPKDQVFYDSFTSPIFDQ.

The 2Fe-2S ferredoxin-type domain occupies 5 to 95 (HKINFDPVDI…DCTIELLNFD (91 aa)). Residues Cys39, Cys44, Cys47, and Cys79 each contribute to the [2Fe-2S] cluster site. The region spanning 105 to 206 (IQDVRTQVQA…TGPYGSFTLK (102 aa)) is the FAD-binding FR-type domain.

The protein belongs to the bacterial ring-hydroxylating dioxygenase ferredoxin reductase family. As to quaternary structure, the propane 2-monooxygenase multicomponent enzyme system is composed of an electron transfer component and a monooxygenase component interacting with the effector protein MimD. The electron transfer component is composed of a reductase (MimB), and the monooxygenase component is formed by a large subunit (MimA) and a small subunit (MimC). FAD serves as cofactor. Requires [2Fe-2S] cluster as cofactor.

Functionally, reductase component of the propane 2-monooxygenase multicomponent enzyme system which is involved in the degradation of propane via the O2-dependent hydroxylation of propane. Reductase catalyzes the transfer of electrons from NADH or NADPH to monooxygenase. This chain is Propane 2-monooxygenase, reductase component, found in Mycolicibacterium smegmatis (strain ATCC 700084 / mc(2)155) (Mycobacterium smegmatis).